Consider the following 214-residue polypeptide: Protein-L-isoaspartate O-methyltransferase (214 aa).

Ser61 is an active-site residue.

It belongs to the methyltransferase superfamily. L-isoaspartyl/D-aspartyl protein methyltransferase family.

The protein localises to the cytoplasm. The enzyme catalyses [protein]-L-isoaspartate + S-adenosyl-L-methionine = [protein]-L-isoaspartate alpha-methyl ester + S-adenosyl-L-homocysteine. In terms of biological role, catalyzes the methyl esterification of L-isoaspartyl residues in peptides and proteins that result from spontaneous decomposition of normal L-aspartyl and L-asparaginyl residues. It plays a role in the repair and/or degradation of damaged proteins. The polypeptide is Protein-L-isoaspartate O-methyltransferase (Paramagnetospirillum magneticum (strain ATCC 700264 / AMB-1) (Magnetospirillum magneticum)).